A 938-amino-acid chain; its full sequence is Cyclin-dependent kinase-like 5 (938 aa).

The Protein kinase domain maps to 13–297; the sequence is FEILGVVGEG…TEQCLNHPTF (285 aa). Residues 19–27 and K42 each bind ATP; that span reads VGEGAYGVV. Residue D135 is the Proton acceptor of the active site. 4 disordered regions span residues 298–348, 382–566, 646–865, and 877–938; these read QTQR…DIQN, KTYQ…RHSK, SPQP…LTAQ, and HPLS…KWKQ. 2 stretches are compositionally biased toward polar residues: residues 319-331 and 382-402; these read ESSTLSNRNQSTK and KTYQASTQPGSSSKDLTNNNI. S407 bears the Phosphoserine mark. Positions 407 to 417 are enriched in basic and acidic residues; it reads SPKEAKSKTEF. Polar residues-rich tracts occupy residues 434–462, 473–482, and 494–548; these read LKSSTRSQQNRHSFMESSQSKAGTLQPSE, IPQSSRSPSY, and DSKS…SGRN. Residue S479 is modified to Phosphoserine. Composition is skewed to basic and acidic residues over residues 549–559 and 679–704; these read NRNEGTLDSRR and QKSEGGVYHDPHSDDGTAPKENRHLY. S720 is subject to Phosphoserine. Residues 728–748 show a composition bias toward polar residues; the sequence is HENNVSTRVSSLPSDSSSGTN. S761 is subject to Phosphoserine. Composition is skewed to basic and acidic residues over residues 769–778 and 817–827; these read DQLKEKEKQG and RPKEWRPEKLS. The span at 880 to 891 shows a compositional bias: polar residues; that stretch reads SQATGGSSNIRQ.

This sequence belongs to the protein kinase superfamily. CMGC Ser/Thr protein kinase family. CDC2/CDKX subfamily. Interacts with MECP2. Post-translationally, autophosphorylated.

Its subcellular location is the nucleus. The protein resides in the cytoplasm. The protein localises to the cytoskeleton. It localises to the cilium basal body. It is found in the microtubule organizing center. Its subcellular location is the centrosome. It carries out the reaction L-seryl-[protein] + ATP = O-phospho-L-seryl-[protein] + ADP + H(+). The enzyme catalyses L-threonyl-[protein] + ATP = O-phospho-L-threonyl-[protein] + ADP + H(+). Functionally, mediates phosphorylation of MECP2. May regulate ciliogenesis. This Mus musculus (Mouse) protein is Cyclin-dependent kinase-like 5.